Reading from the N-terminus, the 136-residue chain is Holo-[acyl-carrier-protein] synthase (136 aa).

Residues aspartate 8 and glutamate 57 each contribute to the Mg(2+) site.

The protein belongs to the P-Pant transferase superfamily. AcpS family. The cofactor is Mg(2+).

Its subcellular location is the cytoplasm. It catalyses the reaction apo-[ACP] + CoA = holo-[ACP] + adenosine 3',5'-bisphosphate + H(+). Functionally, transfers the 4'-phosphopantetheine moiety from coenzyme A to a Ser of acyl-carrier-protein. In Azorhizobium caulinodans (strain ATCC 43989 / DSM 5975 / JCM 20966 / LMG 6465 / NBRC 14845 / NCIMB 13405 / ORS 571), this protein is Holo-[acyl-carrier-protein] synthase.